Consider the following 160-residue polypeptide: Transcription antitermination protein NusB (160 aa).

This sequence belongs to the NusB family.

Its function is as follows. Involved in transcription antitermination. Required for transcription of ribosomal RNA (rRNA) genes. Binds specifically to the boxA antiterminator sequence of the ribosomal RNA (rrn) operons. The polypeptide is Transcription antitermination protein NusB (Gluconobacter oxydans (strain 621H) (Gluconobacter suboxydans)).